A 500-amino-acid polypeptide reads, in one-letter code: Proline/betaine transporter (500 aa).

Residues 1-37 are Cytoplasmic-facing; it reads MLKRKKVKPITLRDVTIIDDGKLRKAITAASLGNAME. Residues 38 to 58 form a helical membrane-spanning segment; sequence WFDFGVYGFVAYALGKVFFPG. Topologically, residues 59–65 are periplasmic; it reads ADPSVQM. A helical transmembrane segment spans residues 66–86; it reads VAALATFSVPFLIRPLGGLFF. The Cytoplasmic portion of the chain corresponds to 87–97; the sequence is GMLGDKYGRQK. Residues 98-118 traverse the membrane as a helical segment; that stretch reads ILAITIVIMSISTFCIGLIPS. Residues 119–121 lie on the Periplasmic side of the membrane; sequence YDT. Residues 122-142 form a helical membrane-spanning segment; the sequence is IGIWAPILLLICKMAQGFSVG. Residues 143-169 lie on the Cytoplasmic side of the membrane; it reads GEYTGASIFVAEYSPDRKRGFMGSWLD. Residues 170-190 form a helical membrane-spanning segment; that stretch reads FGSIAGFVLGAGVVVLISTIV. At 191-194 the chain is on the periplasmic side; it reads GEAN. A helical transmembrane segment spans residues 195–215; it reads FLDWGWRIPFFIALPLGIIGL. Over 216–260 the chain is Cytoplasmic; it reads YLRHALEETPAFQQHVDKLEQGDREGLQDGPKVSFKEIATKYWRS. Residues 261–281 traverse the membrane as a helical segment; the sequence is LLTCIGLVIATNVTYYMLLTY. At 282 to 297 the chain is on the periplasmic side; sequence MPSYLSHNLHYSEDHG. The helical transmembrane segment at 298–318 threads the bilayer; sequence VLIIIAIMIGMLFVQPVMGLL. Residues 319–325 are Cytoplasmic-facing; sequence SDRFGRR. A helical membrane pass occupies residues 326–346; sequence PFVLLGSVALFVLAIPAFILI. Residues 347–350 lie on the Periplasmic side of the membrane; it reads NSNV. The chain crosses the membrane as a helical span at residues 351–371; it reads IGLIFAGLLMLAVILNCFTGV. Topologically, residues 372–390 are cytoplasmic; that stretch reads MASTLPAMFPTHIRYSALA. Residues 391-411 form a helical membrane-spanning segment; that stretch reads AAFNISVLVAGLTPTLAAWLV. Residues 412–416 are Periplasmic-facing; sequence ESSQN. A helical membrane pass occupies residues 417–437; that stretch reads LMMPAYYLMVVAVVGLITGVT. Residues 438–500 are Cytoplasmic-facing; it reads MKETANRPLK…LVQQHPRIDE (63 aa). Residues 453–498 adopt a coiled-coil conformation; sequence ASDIQEAKEILVEHYDNIEQKIDDIDHEIADLQAKRTRLVQQHPRI.

The protein belongs to the major facilitator superfamily. Metabolite:H+ Symporter (MHS) family (TC 2.A.1.6) family.

It is found in the cell inner membrane. Its function is as follows. Proton symporter that senses osmotic shifts and responds by importing osmolytes such as proline, glycine betaine, stachydrine, pipecolic acid, ectoine and taurine. It is both an osmosensor and an osmoregulator which is available to participate early in the bacterial osmoregulatory response. This Escherichia coli O157:H7 protein is Proline/betaine transporter (proP).